Here is a 491-residue protein sequence, read N- to C-terminus: FAD-dependent monooxygenase cle3 (491 aa).

FAD contacts are provided by Glu55, Gly69, Arg128, Asp330, and Ala343. Residue Asn380 is glycosylated (N-linked (GlcNAc...) asparagine). The helical transmembrane segment at 462–482 (STVVWTSLGILGLVVFLFLLF) threads the bilayer.

The protein belongs to the paxM FAD-dependent monooxygenase family. The cofactor is FAD.

The protein localises to the membrane. It participates in secondary metabolite biosynthesis; terpenoid biosynthesis. In terms of biological role, FAD-dependent monooxygenase; part of the cluster A that mediates the biosynthesis of chevalone E and its oxidized derivatives that possess a unique five-membered lactone ring and can synergistically enhance the cytotoxicity of doxorubicin (DOX) in breast cancer cells. Within the pathway, cle3 takes part to the biosynthesis of the molecular scaffold by catalyzing the formation of an (S)-epoxide ring at the terminal olefin of the geranylgeranyl group. The molecular scaffold is commonly biosynthesized by a series of enzymes including the non-reducing polyketide synthase (NR-PKS) cle1 that produces the alpha-pyrone triacetic acid lactone (TAL); The membrane-bound prenyltransferase cle5 that accepts TAL as its substrate to perform a C-3 geranylgeranylation reaction, in which the pathway-dedicated GGPS cle6 is required to provide GGPP, the other substrate of cle5; the FAD-dependent monooxygenase Cle3 that forms an (S)-epoxide ring at the terminal olefin of the geranylgeranyl group; and the terpene cyclase Cle7 that catalyzes the cyclization of the prenyl group that yields the pentacyclic pathway intermediate chevalone E. Chevalone E can derivatize into seven new oxidized analogs by the cytochrome P450 monooxygenases cle2 (acting at C-20) and cle4 (acting at C-11 and C-12). The polypeptide is FAD-dependent monooxygenase cle3 (Aspergillus versicolor).